We begin with the raw amino-acid sequence, 583 residues long: Sensor protein SrrB (583 aa).

Residues 1–11 (MMSRLNSVVIK) lie on the Cytoplasmic side of the membrane. The chain crosses the membrane as a helical span at residues 12-32 (LWLTIILIVTTVLILLSIALI). Residues 33–174 (TFMQYYFTQE…SIEDTNNAIT (142 aa)) are Extracellular-facing. A helical membrane pass occupies residues 175 to 195 (IITIITAVIFLTITTVFAFFL). The Cytoplasmic segment spans residues 196 to 583 (SSRITKPLRR…TFIIKLPKPE (388 aa)). The region spanning 197–249 (SRITKPLRRLRDQATRVSEGDYSYKPSVTTKDEIGQLSQAFNQMSTEIEEHVD) is the HAMP domain. The Histidine kinase domain maps to 366 to 583 (NVSHELRTPI…TFIIKLPKPE (218 aa)). Histidine 369 is subject to Phosphohistidine; by autocatalysis.

Its subcellular location is the cell membrane. It carries out the reaction ATP + protein L-histidine = ADP + protein N-phospho-L-histidine.. Member of the two-component regulatory system SrrA/SrrB, which is involved in the global regulation of staphylococcal virulence factors in response to environmental oxygen levels as well as biofilm formation. Also plays an essential role in host-derived nitric oxide resistance by regulating hmp/flavohemoglobin, an enzyme that detoxifies nitric oxide by converting it to nitrate. Functions as a sensor protein kinase which is autophosphorylated at a histidine residue and transfers its phosphate group to SrrA. In turn, SrrA binds to the upstream promoter regions of the target genes to positively and negatively regulate their expression. The chain is Sensor protein SrrB (srrB) from Staphylococcus aureus (strain MRSA252).